Consider the following 140-residue polypeptide: Nucleoside diphosphate kinase (140 aa).

The ATP site is built by Lys11, Phe59, Arg87, Thr93, Arg104, and Asn114. His117 acts as the Pros-phosphohistidine intermediate in catalysis.

It belongs to the NDK family. Homotetramer. The cofactor is Mg(2+).

Its subcellular location is the cytoplasm. The enzyme catalyses a 2'-deoxyribonucleoside 5'-diphosphate + ATP = a 2'-deoxyribonucleoside 5'-triphosphate + ADP. It carries out the reaction a ribonucleoside 5'-diphosphate + ATP = a ribonucleoside 5'-triphosphate + ADP. Major role in the synthesis of nucleoside triphosphates other than ATP. The ATP gamma phosphate is transferred to the NDP beta phosphate via a ping-pong mechanism, using a phosphorylated active-site intermediate. In Xanthobacter autotrophicus (strain ATCC BAA-1158 / Py2), this protein is Nucleoside diphosphate kinase.